Consider the following 230-residue polypeptide: Large ribosomal subunit protein uL1 (230 aa).

The protein belongs to the universal ribosomal protein uL1 family. As to quaternary structure, part of the 50S ribosomal subunit.

Binds directly to 23S rRNA. The L1 stalk is quite mobile in the ribosome, and is involved in E site tRNA release. Functionally, protein L1 is also a translational repressor protein, it controls the translation of the L11 operon by binding to its mRNA. The polypeptide is Large ribosomal subunit protein uL1 (Nitrosomonas europaea (strain ATCC 19718 / CIP 103999 / KCTC 2705 / NBRC 14298)).